The chain runs to 272 residues: Methylesterase 8 (272 aa).

The active-site Acyl-ester intermediate is the Ser102. Residues Asp222 and His250 each act as charge relay system in the active site.

It belongs to the AB hydrolase superfamily. Methylesterase family.

Its function is as follows. Methylesterase shown to have carboxylesterase activity in vitro. The chain is Methylesterase 8 from Arabidopsis thaliana (Mouse-ear cress).